The chain runs to 196 residues: Corticoliberin (196 aa).

The first 24 residues, M1 to A24, serve as a signal peptide directing secretion. A propeptide spanning residues L25–R153 is cleaved from the precursor. 3 disordered regions span residues P32–A61, A85–E105, and G136–P158. Low complexity-rich tracts occupy residues P38 to F47 and A85 to P104. Over residues E146 to E156 the composition is skewed to basic and acidic residues. I194 carries the isoleucine amide modification.

The protein belongs to the sauvagine/corticotropin-releasing factor/urotensin I family. Interacts (via C-terminus) with CRFR1 (via N-terminal extracellular domain). Produced by the hypothalamus and placenta.

It localises to the secreted. Functionally, hormone regulating the release of corticotropin from pituitary gland. Induces NLRP6 in intestinal epithelial cells, hence may influence gut microbiota profile. This chain is Corticoliberin (CRH), found in Homo sapiens (Human).